Here is a 118-residue protein sequence, read N- to C-terminus: Small ribosomal subunit protein uS13 (118 aa).

Residues Asn-94–Arg-118 are disordered. The span at Ala-106–Arg-118 shows a compositional bias: basic residues.

This sequence belongs to the universal ribosomal protein uS13 family. As to quaternary structure, part of the 30S ribosomal subunit. Forms a loose heterodimer with protein S19. Forms two bridges to the 50S subunit in the 70S ribosome.

Located at the top of the head of the 30S subunit, it contacts several helices of the 16S rRNA. In the 70S ribosome it contacts the 23S rRNA (bridge B1a) and protein L5 of the 50S subunit (bridge B1b), connecting the 2 subunits; these bridges are implicated in subunit movement. Contacts the tRNAs in the A and P-sites. The sequence is that of Small ribosomal subunit protein uS13 from Psychrobacter sp. (strain PRwf-1).